We begin with the raw amino-acid sequence, 40 residues long: Photosystem II reaction center protein J (40 aa).

The helical transmembrane segment at 8-28 threads the bilayer; the sequence is IPLWLIGTIAGILVIGLVGIF.

Belongs to the PsbJ family. PSII is composed of 1 copy each of membrane proteins PsbA, PsbB, PsbC, PsbD, PsbE, PsbF, PsbH, PsbI, PsbJ, PsbK, PsbL, PsbM, PsbT, PsbX, PsbY, PsbZ, Psb30/Ycf12, at least 3 peripheral proteins of the oxygen-evolving complex and a large number of cofactors. It forms dimeric complexes.

It localises to the plastid. It is found in the chloroplast thylakoid membrane. Its function is as follows. One of the components of the core complex of photosystem II (PSII). PSII is a light-driven water:plastoquinone oxidoreductase that uses light energy to abstract electrons from H(2)O, generating O(2) and a proton gradient subsequently used for ATP formation. It consists of a core antenna complex that captures photons, and an electron transfer chain that converts photonic excitation into a charge separation. The polypeptide is Photosystem II reaction center protein J (Anthoceros angustus (Hornwort)).